The primary structure comprises 361 residues: MKALILVGGFGTRLRPLTLSVPKPLVDFGNKPMILHQIEALKEVGVTEVVLAINYQPEVMLNFLKDFESKLGIKITCSQETEPLGTAGPLALARDKLADGSGDPFFVLNSDVISEYPFAELIQFHKSHGGEATIMVTKVDEPSKYGVVVMEDETDKVERFVEKPKVFVGNKINAGIYLLNPSVLDRIELKPTSIEKEVFPRIAADNGLFAMVLPGFWMDIGQPRDYITGLRLYLDSLRKKAPAKLASGAHVLGNVLVHETAVIGEGCLIGPDVAVGPGCVVEAGVRLSRCTVMRGARVKKHACISSSIIGWHSTVGMWARVENMTILGEDVHVCDEVYSNGGVVLPHKEIKSSILKPEIVM.

Positions 6 and 7 each coordinate GDP-alpha-D-mannose. 5 residues coordinate diphosphate: Gly-9, Gly-11, Thr-12, Arg-13, and Lys-23. Gly-85, Asn-109, Asp-111, Gly-146, and Asn-173 together coordinate GDP-alpha-D-mannose.

The protein belongs to the transferase hexapeptide repeat family.

The catalysed reaction is alpha-D-mannose 1-phosphate + GTP + H(+) = GDP-alpha-D-mannose + diphosphate. Its pathway is nucleotide-sugar biosynthesis; GDP-alpha-D-mannose biosynthesis; GDP-alpha-D-mannose from alpha-D-mannose 1-phosphate (GTP route): step 1/1. Its function is as follows. Catalyzes a reaction of the Smirnoff-Wheeler pathway, the major route to ascorbate biosynthesis in plants. The polypeptide is Probable mannose-1-phosphate guanylyltransferase 1 (Oryza sativa subsp. japonica (Rice)).